We begin with the raw amino-acid sequence, 316 residues long: Pyridoxal 5'-phosphate synthase subunit PdxS (316 aa).

Position 44 (Asp44) interacts with D-ribose 5-phosphate. Catalysis depends on Lys101, which acts as the Schiff-base intermediate with D-ribose 5-phosphate. Position 173 (Gly173) interacts with D-ribose 5-phosphate. D-glyceraldehyde 3-phosphate is bound at residue Lys185. Residues Gly234 and 255–256 (GS) contribute to the D-ribose 5-phosphate site.

The protein belongs to the PdxS/SNZ family. In the presence of PdxT, forms a dodecamer of heterodimers.

It carries out the reaction aldehydo-D-ribose 5-phosphate + D-glyceraldehyde 3-phosphate + L-glutamine = pyridoxal 5'-phosphate + L-glutamate + phosphate + 3 H2O + H(+). It participates in cofactor biosynthesis; pyridoxal 5'-phosphate biosynthesis. In terms of biological role, catalyzes the formation of pyridoxal 5'-phosphate from ribose 5-phosphate (RBP), glyceraldehyde 3-phosphate (G3P) and ammonia. The ammonia is provided by the PdxT subunit. Can also use ribulose 5-phosphate and dihydroxyacetone phosphate as substrates, resulting from enzyme-catalyzed isomerization of RBP and G3P, respectively. This is Pyridoxal 5'-phosphate synthase subunit PdxS from Sulfurisphaera tokodaii (strain DSM 16993 / JCM 10545 / NBRC 100140 / 7) (Sulfolobus tokodaii).